Consider the following 1483-residue polypeptide: Ubiquitin fusion degradation protein 4 (1483 aa).

The segment at Met1 to His117 is disordered. Positions Asn8 to Asn18 are enriched in basic and acidic residues. Over residues Glu61 to Asn70 the composition is skewed to acidic residues. Thr87 bears the Phosphothreonine mark. Residue Lys349 forms a Glycyl lysine isopeptide (Lys-Gly) (interchain with G-Cter in ubiquitin) linkage. The tract at residues Cys1007–Lys1081 is K-box. Residues Ala1376–Ser1483 enclose the HECT domain. Cys1450 acts as the Glycyl thioester intermediate in catalysis.

This sequence belongs to the UPL family. K-HECT subfamily.

It carries out the reaction S-ubiquitinyl-[E2 ubiquitin-conjugating enzyme]-L-cysteine + [acceptor protein]-L-lysine = [E2 ubiquitin-conjugating enzyme]-L-cysteine + N(6)-ubiquitinyl-[acceptor protein]-L-lysine.. Its function is as follows. E3 ubiquitin-protein ligase which accepts ubiquitin from an E2 ubiquitin-conjugating enzyme in the form of a thioester and then directly transfers the ubiquitin to targeted substrates. This Saccharomyces cerevisiae (strain ATCC 204508 / S288c) (Baker's yeast) protein is Ubiquitin fusion degradation protein 4 (UFD4).